A 109-amino-acid chain; its full sequence is NAD(P)H-quinone oxidoreductase subunit M (109 aa).

It belongs to the complex I NdhM subunit family. In terms of assembly, NDH-1 can be composed of about 15 different subunits; different subcomplexes with different compositions have been identified which probably have different functions.

The protein localises to the cellular thylakoid membrane. It carries out the reaction a plastoquinone + NADH + (n+1) H(+)(in) = a plastoquinol + NAD(+) + n H(+)(out). The catalysed reaction is a plastoquinone + NADPH + (n+1) H(+)(in) = a plastoquinol + NADP(+) + n H(+)(out). NDH-1 shuttles electrons from an unknown electron donor, via FMN and iron-sulfur (Fe-S) centers, to quinones in the respiratory and/or the photosynthetic chain. The immediate electron acceptor for the enzyme in this species is believed to be plastoquinone. Couples the redox reaction to proton translocation, and thus conserves the redox energy in a proton gradient. Cyanobacterial NDH-1 also plays a role in inorganic carbon-concentration. This Microcystis aeruginosa (strain NIES-843 / IAM M-2473) protein is NAD(P)H-quinone oxidoreductase subunit M.